We begin with the raw amino-acid sequence, 419 residues long: UDP-N-acetylglucosamine 1-carboxyvinyltransferase (419 aa).

Residue 22 to 23 (KN) participates in phosphoenolpyruvate binding. Arginine 93 lines the UDP-N-acetyl-alpha-D-glucosamine pocket. The Proton donor role is filled by cysteine 117. Cysteine 117 carries the 2-(S-cysteinyl)pyruvic acid O-phosphothioketal modification. UDP-N-acetyl-alpha-D-glucosamine is bound by residues aspartate 307 and isoleucine 329.

This sequence belongs to the EPSP synthase family. MurA subfamily.

The protein localises to the cytoplasm. It carries out the reaction phosphoenolpyruvate + UDP-N-acetyl-alpha-D-glucosamine = UDP-N-acetyl-3-O-(1-carboxyvinyl)-alpha-D-glucosamine + phosphate. It functions in the pathway cell wall biogenesis; peptidoglycan biosynthesis. Functionally, cell wall formation. Adds enolpyruvyl to UDP-N-acetylglucosamine. In Shewanella putrefaciens (strain CN-32 / ATCC BAA-453), this protein is UDP-N-acetylglucosamine 1-carboxyvinyltransferase.